The sequence spans 475 residues: MALYGKKTDLSSASSGGYTGVADVYQLWHYHARGNGNIGDKPSYTLEQARDQITRGNITWNGEKVFGKSAALTYSFLQSVADSDMPDNFKGFVKFNAAQIQQTKLALQSWADVANVTFSEAKDGERATIQFGNYTLTPDGNTDNNSQAFGFYPGNWKWAGSAWFNYNQADNQRPDINEFGRNTLTHEIGHTLGLYHPGDYDASDGNPGYKDVTYAEDTRQFSIMSYWNEGYTGGDFHGYHAAAPHDIAAIQKLYGANMSTRTGDTVYGFHSNSGRDFYTATDSKTPLIFSVWDAGGNDTFDFSGYSANQRISLISGTFSDVGGLKAMVSIAAGAVIENAIGGSGHDVIVGNLSDNRIDGGAGNDVLYGDGGADILTGGAGKDIFVYAWEKDSLSSAPDTITDFQRGEDRIDLSAFNKNHDLRFVDNFSGKGNEVVLNWDSQSHQTNMWLHLSGHETADFLVNIVGAALQPSDVIV.

The propeptide occupies 1-14 (MALYGKKTDLSSAS). A Zn(2+)-binding site is contributed by H186. The active site involves E187. The Zn(2+) site is built by H190 and Y226. Residues R261, G263, T265, D293, G295, G296, D298, E337, G342, G344, D346, N351, N355, G359, G360, A361, G362, D364, G368, G370, G371, D373, G377, G378, A379, G380, D382, D391, D398, and D408 each contribute to the Ca(2+) site. Hemolysin-type calcium-binding repeat units lie at residues 340 to 357 (IGGSGHDVIVGNLSDNRI) and 358 to 375 (DGGAGNDVLYGDGGADIL).

This sequence belongs to the peptidase M10B family. It depends on Ca(2+) as a cofactor. The cofactor is Zn(2+).

Its subcellular location is the secreted. It catalyses the reaction Preferential cleavage of bonds with hydrophobic residues in P1'.. The polypeptide is Serralysin G (prtG) (Dickeya chrysanthemi (Pectobacterium chrysanthemi)).